Reading from the N-terminus, the 498-residue chain is MRTNPTTSSSVVSTLEEKNLGRIAQIIGPVLDVVFPPGKMPNIYNALVVEGRDTVGQQINVTCEVQQLLGNNRVRAVAMSATDGLMRGMEVIDTGAPLSVPVGGATLGRIFNVLGEPVDNLGPVDTRTTSPIHRSAPAFIQLDTKLSIFETGIKVVDLLAPYRRGGKIGLFGGAGVGKTVLIMELINNIAKAHGGVSVFGGVGERTREGNDLYMEMKESGVINEKNIAESKVALVYGQMNEPPGARMRVGLTALTMAEYFRDVNEQDVLLFIDNIFRFVQAGSEVSALLGRMPSAVGYQPTLSTEMGSLQERITSTKEGSITSIQAVYVPADDLTDPAPATTFAHLDATTVLSRVLAAKGIYPAVDPLDSTSTMLQPRIVGEEHYETAQRVKQTSQRYKELQDIIAILGLDELSEEDRLTVARARKIERFLSQPFFVAEVFTGSPGKYVGLAETIRGFQLILSGELDGLPEQAFYLVGNIDEATAKAMNLEVESKLKK.

172-179 contributes to the ATP binding site; it reads GGAGVGKT.

This sequence belongs to the ATPase alpha/beta chains family. As to quaternary structure, F-type ATPases have 2 components, CF(1) - the catalytic core - and CF(0) - the membrane proton channel. CF(1) has five subunits: alpha(3), beta(3), gamma(1), delta(1), epsilon(1). CF(0) has four main subunits: a(1), b(1), b'(1) and c(9-12).

It localises to the plastid. The protein resides in the chloroplast thylakoid membrane. The enzyme catalyses ATP + H2O + 4 H(+)(in) = ADP + phosphate + 5 H(+)(out). Produces ATP from ADP in the presence of a proton gradient across the membrane. The catalytic sites are hosted primarily by the beta subunits. This Calamus usitatus (Palm tree) protein is ATP synthase subunit beta, chloroplastic.